Consider the following 184-residue polypeptide: GMP synthase [glutamine-hydrolyzing] subunit A (184 aa).

Positions 3–184 (PLYVVNNHGQ…FENFDGICSE (182 aa)) constitute a Glutamine amidotransferase type-1 domain. The active-site Nucleophile is cysteine 75. Residues histidine 162 and glutamate 164 contribute to the active site.

In terms of assembly, heterodimer composed of a glutamine amidotransferase subunit (A) and a GMP-binding subunit (B).

The enzyme catalyses XMP + L-glutamine + ATP + H2O = GMP + L-glutamate + AMP + diphosphate + 2 H(+). It functions in the pathway purine metabolism; GMP biosynthesis; GMP from XMP (L-Gln route): step 1/1. Its function is as follows. Catalyzes the synthesis of GMP from XMP. The sequence is that of GMP synthase [glutamine-hydrolyzing] subunit A from Methanoculleus marisnigri (strain ATCC 35101 / DSM 1498 / JR1).